The following is a 160-amino-acid chain: Cyclic pyranopterin monophosphate synthase (160 aa).

Substrate is bound by residues 74 to 76 (LSH) and 112 to 113 (ME). Residue Asp127 is part of the active site.

This sequence belongs to the MoaC family. As to quaternary structure, homohexamer; trimer of dimers.

The catalysed reaction is (8S)-3',8-cyclo-7,8-dihydroguanosine 5'-triphosphate = cyclic pyranopterin phosphate + diphosphate. The protein operates within cofactor biosynthesis; molybdopterin biosynthesis. Its function is as follows. Catalyzes the conversion of (8S)-3',8-cyclo-7,8-dihydroguanosine 5'-triphosphate to cyclic pyranopterin monophosphate (cPMP). The chain is Cyclic pyranopterin monophosphate synthase from Pelobacter propionicus (strain DSM 2379 / NBRC 103807 / OttBd1).